The sequence spans 294 residues: MHPRFQTAFAQLADNLQSALEPILADKYFPALLTGEQVSSLKSATGLDEDALAFALLPLAAACARTPLSNFNVGAIARGVSGTWYFGANMEFIGATMQQTVHAEQSAISHAWLSGEKALAAITVNYTPCGHCRQFMNELNSGLDLRIHLPGREAHALRDYLPDAFGPKDLEIKTLLMDEQDHGYALTGDALSQAAIAAANRSHMPYSKSPSGVALECKDGRIFSGSYAENAAFNPTLPPLQGALILLNLKGYDYPDIQRAVLAENADAPLIQWDATSATLKALGCHSIDRVLLA.

CMP/dCMP-type deaminase domains follow at residues Asp48–Lys168 and Leu186–Ala294. Substrate is bound at residue Asn89–Glu91. Position 102 (His102) interacts with Zn(2+). The active-site Proton donor is Glu104. Zn(2+)-binding residues include Cys129 and Cys132.

This sequence belongs to the cytidine and deoxycytidylate deaminase family. As to quaternary structure, homodimer. The cofactor is Zn(2+).

The enzyme catalyses cytidine + H2O + H(+) = uridine + NH4(+). It carries out the reaction 2'-deoxycytidine + H2O + H(+) = 2'-deoxyuridine + NH4(+). Functionally, this enzyme scavenges exogenous and endogenous cytidine and 2'-deoxycytidine for UMP synthesis. This chain is Cytidine deaminase, found in Escherichia coli O139:H28 (strain E24377A / ETEC).